The following is a 110-amino-acid chain: UPF0132 membrane protein MJ1443 (110 aa).

Transmembrane regions (helical) follow at residues 15–35, 49–69, and 70–90; these read IEGALCYLFGVITGILFYILE, IILFGGLWVLSIILAFIPYGW, and MLSGLVNLAAFILWIVCMYKA.

Belongs to the UPF0132 family.

It localises to the cell membrane. In Methanocaldococcus jannaschii (strain ATCC 43067 / DSM 2661 / JAL-1 / JCM 10045 / NBRC 100440) (Methanococcus jannaschii), this protein is UPF0132 membrane protein MJ1443.